We begin with the raw amino-acid sequence, 300 residues long: Phosphatidylglycerol--prolipoprotein diacylglyceryl transferase (300 aa).

The next 7 helical transmembrane spans lie at 17–37 (LAIR…LWFG), 59–79 (MLFY…VLFY), 94–114 (VWEG…AMML), 129–149 (FIAP…FING), 204–224 (SQIY…WLYA), 230–250 (MGAV…AAEF), and 265–285 (LSMG…MLVW). Arg142 contributes to the a 1,2-diacyl-sn-glycero-3-phospho-(1'-sn-glycerol) binding site.

The protein belongs to the Lgt family.

It localises to the cell inner membrane. It catalyses the reaction L-cysteinyl-[prolipoprotein] + a 1,2-diacyl-sn-glycero-3-phospho-(1'-sn-glycerol) = an S-1,2-diacyl-sn-glyceryl-L-cysteinyl-[prolipoprotein] + sn-glycerol 1-phosphate + H(+). The protein operates within protein modification; lipoprotein biosynthesis (diacylglyceryl transfer). Functionally, catalyzes the transfer of the diacylglyceryl group from phosphatidylglycerol to the sulfhydryl group of the N-terminal cysteine of a prolipoprotein, the first step in the formation of mature lipoproteins. This chain is Phosphatidylglycerol--prolipoprotein diacylglyceryl transferase, found in Ralstonia pickettii (strain 12J).